The chain runs to 121 residues: Large ribosomal subunit protein uL14c (121 aa).

This sequence belongs to the universal ribosomal protein uL14 family. Part of the 50S ribosomal subunit.

It is found in the plastid. The protein localises to the apicoplast. Functionally, binds to 23S rRNA. This is Large ribosomal subunit protein uL14c (rpl14) from Toxoplasma gondii.